Reading from the N-terminus, the 145-residue chain is D-aminoacyl-tRNA deacylase (145 aa).

The Gly-cisPro motif, important for rejection of L-amino acids signature appears at 137 to 138; the sequence is GP.

This sequence belongs to the DTD family. As to quaternary structure, homodimer.

It is found in the cytoplasm. The enzyme catalyses glycyl-tRNA(Ala) + H2O = tRNA(Ala) + glycine + H(+). The catalysed reaction is a D-aminoacyl-tRNA + H2O = a tRNA + a D-alpha-amino acid + H(+). Functionally, an aminoacyl-tRNA editing enzyme that deacylates mischarged D-aminoacyl-tRNAs. Also deacylates mischarged glycyl-tRNA(Ala), protecting cells against glycine mischarging by AlaRS. Acts via tRNA-based rather than protein-based catalysis; rejects L-amino acids rather than detecting D-amino acids in the active site. By recycling D-aminoacyl-tRNA to D-amino acids and free tRNA molecules, this enzyme counteracts the toxicity associated with the formation of D-aminoacyl-tRNA entities in vivo and helps enforce protein L-homochirality. The chain is D-aminoacyl-tRNA deacylase from Pectobacterium atrosepticum (strain SCRI 1043 / ATCC BAA-672) (Erwinia carotovora subsp. atroseptica).